The following is a 251-amino-acid chain: Triosephosphate isomerase 1 (251 aa).

9–11 lines the substrate pocket; that stretch reads NWK. H95 functions as the Electrophile in the catalytic mechanism. The active-site Proton acceptor is the E167. Residues G173, S213, and 234–235 each bind substrate; that span reads GG.

This sequence belongs to the triosephosphate isomerase family. Homodimer.

It is found in the cytoplasm. The enzyme catalyses D-glyceraldehyde 3-phosphate = dihydroxyacetone phosphate. Its pathway is carbohydrate biosynthesis; gluconeogenesis. It functions in the pathway carbohydrate degradation; glycolysis; D-glyceraldehyde 3-phosphate from glycerone phosphate: step 1/1. Involved in the gluconeogenesis. Catalyzes stereospecifically the conversion of dihydroxyacetone phosphate (DHAP) to D-glyceraldehyde-3-phosphate (G3P). The sequence is that of Triosephosphate isomerase 1 from Listeria innocua serovar 6a (strain ATCC BAA-680 / CLIP 11262).